We begin with the raw amino-acid sequence, 665 residues long: Succinate dehydrogenase [ubiquinone] flavoprotein subunit A, mitochondrial (665 aa).

A mitochondrion-targeting transit peptide spans 1 to 45; sequence MALLKVAPSRLLSRALQLASRVQNCTPTVTTARRNFHFTVYGRKD. FAD-binding residues include A72, A75, T94, K95, and S101. Residue H102 is modified to Tele-8alpha-FAD histidine. Residues T103, G108, A224, and D278 each coordinate FAD. Oxaloacetate is bound by residues H299, R343, and H410. Residue R343 is the Proton acceptor of the active site. E443 is an FAD binding site. Oxaloacetate-binding residues include R454 and A457. Positions 459 and 460 each coordinate FAD.

The protein belongs to the FAD-dependent oxidoreductase 2 family. FRD/SDH subfamily. Component of complex II composed of four subunits: a flavoprotein (FP), an iron-sulfur protein (IP), and a cytochrome b composed of a large and a small subunit. The cofactor is FAD.

It localises to the mitochondrion inner membrane. It catalyses the reaction a ubiquinone + succinate = a ubiquinol + fumarate. It carries out the reaction (R)-malate + a quinone = enol-oxaloacetate + a quinol. The enzyme catalyses (S)-malate + a quinone = enol-oxaloacetate + a quinol. The protein operates within carbohydrate metabolism; tricarboxylic acid cycle; fumarate from succinate (eukaryal route): step 1/1. With respect to regulation, enol-oxaloacetate inhibits the succinate dehydrogenase activity. Functionally, flavoprotein (FP) subunit of succinate dehydrogenase (SDH) that is involved in complex II of the mitochondrial electron transport chain and is responsible for transferring electrons from succinate to ubiquinone (coenzyme Q). SDH also oxidizes malate to the non-canonical enol form of oxaloacetate, enol-oxaloacetate. Enol-oxaloacetate, which is a potent inhibitor of the succinate dehydrogenase activity, is further isomerized into keto-oxaloacetate. The polypeptide is Succinate dehydrogenase [ubiquinone] flavoprotein subunit A, mitochondrial (sdha-a) (Xenopus laevis (African clawed frog)).